Here is a 281-residue protein sequence, read N- to C-terminus: 18S rRNA (guanine-N(7))-methyltransferase (281 aa).

The segment at 256 to 281 is disordered; that stretch reads KARRRRQGKEVCPDTQYTGRKRKPRF.

The protein belongs to the class I-like SAM-binding methyltransferase superfamily. BUD23/WBSCR22 family. As to quaternary structure, heterodimer with TRMT112; this heterodimerization is necessary for the metabolic stability and activity of the catalytic subunit BUD23. Interacts with GRIP1. May be ubiquitinated and targeted to degradation in response to pro-inflammatory cytokine signaling.

The protein localises to the nucleus. Its subcellular location is the nucleoplasm. It localises to the cytoplasm. It is found in the perinuclear region. It catalyses the reaction a guanosine in 18S rRNA + S-adenosyl-L-methionine = an N(7)-methylguanosine in 18S rRNA + S-adenosyl-L-homocysteine. In terms of biological role, S-adenosyl-L-methionine-dependent methyltransferase that specifically methylates the N(7) position of a guanine in 18S rRNA. Requires the methyltransferase adapter protein TRM112 for full rRNA methyltransferase activity. Involved in the pre-rRNA processing steps leading to small-subunit rRNA production independently of its RNA-modifying catalytic activity. Important for biogenesis end export of the 40S ribosomal subunit independent on its methyltransferase activity. Locus-specific steroid receptor coactivator. Potentiates transactivation by glucocorticoid (NR3C1), mineralocorticoid (NR3C2), androgen (AR) and progesterone (PGR) receptors. Required for the maintenance of open chromatin at the TSC22D3/GILZ locus to facilitate NR3C1 loading on the response elements. Required for maintenance of dimethylation on histone H3 'Lys-79' (H3K79me2), although direct histone methyltransferase activity is not observed in vitro. This is 18S rRNA (guanine-N(7))-methyltransferase from Bos taurus (Bovine).